The sequence spans 199 residues: MSNMEKHLFNLKFAAKELNRNSKRCDKEEKAEKAKIKKAIQKGNMEVARIHAENAIRQKNQAINFLRMSARVDAVAARVQTAVTMGKVTKSMAGVVKSMDATLKSMNLEKISALMDKFEHQFETLDVQTQQMENTMSNTTTLTTPQNQVDMLLQEMADEAGLDLNMELPQGQTGSVGTSVASAEQDELSQRLARLRDQV.

Coiled-coil stretches lie at residues 10 to 48 and 178 to 199; these read NLKFAAKELNRNSKRCDKEEKAEKAKIKKAIQKGNMEVA and TSVASAEQDELSQRLARLRDQV. Positions 167–199 are disordered; that stretch reads ELPQGQTGSVGTSVASAEQDELSQRLARLRDQV. The span at 170–182 shows a compositional bias: polar residues; sequence QGQTGSVGTSVAS. Residues 186–196 carry the MIT-interacting motif motif; the sequence is DELSQRLARLR.

Belongs to the SNF7 family. In terms of assembly, probable peripherally associated component of the endosomal sorting required for transport complex III (ESCRT-III).

It localises to the cytoplasm. Its subcellular location is the cytosol. The protein resides in the endosome. The protein localises to the late endosome membrane. In terms of biological role, probable peripherally associated component of the endosomal sorting required for transport complex III (ESCRT-III) which is involved in multivesicular bodies (MVBs) formation and sorting of endosomal cargo proteins into MVBs. MVBs contain intraluminal vesicles (ILVs) that are generated by invagination and scission from the limiting membrane of the endosome and mostly are delivered to lysosomes enabling degradation of membrane proteins, such as stimulated growth factor receptors, lysosomal enzymes and lipids. The protein is Charged multivesicular body protein 1b (CHMP1B) of Gallus gallus (Chicken).